Here is an 870-residue protein sequence, read N- to C-terminus: H(+)/Cl(-) exchange transporter 6 (870 aa).

The Cytoplasmic segment spans residues 1-80 (MAGCRGSVCC…KKGRRYEAVK (80 aa)). The next 2 helical transmembrane spans lie at 81-113 (WMVV…FGVV) and 128-150 (LSLL…LVLI). A Selectivity filter part_1 motif is present at residues 156–160 (GSGIP). Ser157 contacts chloride. The segment at residues 159–166 (IPEIKCYL) is an intramembrane region (helical). 2 helical membrane-spanning segments follow: residues 176–194 (RLRT…VSGG) and 200–217 (EGPM…LPQF). The Selectivity filter part_2 signature appears at 198-202 (GKEGP). 2 consecutive intramembrane regions (helical) follow at residues 241 to 253 (FVSA…VAAA) and 257 to 265 (PIGGTLFSL). Transmembrane regions (helical) follow at residues 277 to 294 (TWKV…LNFF), 335 to 364 (GFFV…YRMR), and 371 to 392 (KLVR…VFVA). Residues Asn410, Asn423, and Asn433 are each glycosylated (N-linked (GlcNAc...) asparagine). 2 consecutive transmembrane segments (helical) span residues 463–482 (PVTL…WTFG) and 488–512 (GLFV…KSYI). A Selectivity filter part_3 motif is present at residues 488–492 (GLFVP). A chloride-binding site is contributed by Phe490. An intramembrane region (helical) is located at residues 520–534 (GTFALIGAAAFLGGV). Positions 535 to 537 (VRM) form an intramembrane region, note=Loop between two helices. Positions 538-549 (TISLTVILIEST) form an intramembrane region, helical. The segment at residues 550–553 (NEIT) is an intramembrane region (note=Loop between two helices). A helical transmembrane segment spans residues 554–572 (YGLPIMVTLMVAKWTGDLF). The Cytoplasmic segment spans residues 573 to 870 (NKGIYDVHIG…ARLRQHYQTL (298 aa)). Tyr577 contributes to the chloride binding site. A CBS 1 domain is found at 606–663 (MEPNLTYVYPHTRIQSLVSILRTTVHHAFPVVTENRGNEKEFMKGNQLISNNIKFKKS). 631 to 633 (HHA) contributes to the ATP binding site. Ser774 carries the phosphoserine modification. Positions 808–869 (MNPSPFTVSP…QARLRQHYQT (62 aa)) constitute a CBS 2 domain. 850–853 (TRHN) provides a ligand contact to ATP.

This sequence belongs to the chloride channel (TC 2.A.49) family. ClC-6/CLCN6 subfamily. N-glycosylated on several asparagine residues. As to expression, detected in whole brain and in hippocampus neurons (at protein level). Detected in brain, trigeminus, dorsal root ganglion, spinal cord, eye, kidney, testis, skeletal muscle, thymus and pancreas. Isoform ClC-6c is expressed only in kidney.

Its subcellular location is the late endosome membrane. It carries out the reaction 2 chloride(in) + H(+)(out) = 2 chloride(out) + H(+)(in). Voltage-gated channel mediating the exchange of chloride ions against protons. Functions as antiporter and contributes to the acidification of the late endosome lumen. The CLC channel family contains both chloride channels and proton-coupled anion transporters that exchange chloride or another anion for protons. The presence of conserved gating glutamate residues is typical for family members that function as antiporters. The polypeptide is H(+)/Cl(-) exchange transporter 6 (Mus musculus (Mouse)).